The primary structure comprises 352 residues: Inhibin beta C chain (352 aa).

Residues 1–18 form the signal peptide; that stretch reads MTSSLLLAFLLLAPTTVA. A propeptide spanning residues 19–236 is cleaved from the precursor; it reads TPRAGGQCPA…VGGKHQIHRR (218 aa). N-linked (GlcNAc...) asparagine glycosylation is found at Asn-110, Asn-143, and Asn-161. Intrachain disulfides connect Cys-240–Cys-248, Cys-247–Cys-317, Cys-276–Cys-349, and Cys-280–Cys-351.

This sequence belongs to the TGF-beta family. In terms of assembly, homodimeric or heterodimeric through association with alpha and beta subunits, linked by one or more disulfide bonds. Inhibins are heterodimers of one alpha and one beta subunit. Activins are homo- or heterodimers of beta subunits only. Expressed in benign prostatic hyperplasia.

It localises to the secreted. Inhibins and activins inhibit and activate, respectively, the secretion of follitropin by the pituitary gland. Inhibins/activins are involved in regulating a number of diverse functions such as hypothalamic and pituitary hormone secretion, gonadal hormone secretion, germ cell development and maturation, erythroid differentiation, insulin secretion, nerve cell survival, embryonic axial development or bone growth, depending on their subunit composition. Inhibins appear to oppose the functions of activins. This Homo sapiens (Human) protein is Inhibin beta C chain (INHBC).